A 150-amino-acid chain; its full sequence is Endoribonuclease YbeY (150 aa).

Residues histidine 108, histidine 112, and histidine 118 each contribute to the Zn(2+) site.

This sequence belongs to the endoribonuclease YbeY family. The cofactor is Zn(2+).

The protein localises to the cytoplasm. Its function is as follows. Single strand-specific metallo-endoribonuclease involved in late-stage 70S ribosome quality control and in maturation of the 3' terminus of the 16S rRNA. This chain is Endoribonuclease YbeY, found in Methylococcus capsulatus (strain ATCC 33009 / NCIMB 11132 / Bath).